The following is a 249-amino-acid chain: Basic leucine zipper 23 (249 aa).

Positions 66–90 (KVSTDDTSESSGKKRPLGNREAVRK) are disordered. Positions 74 to 121 (ESSGKKRPLGNREAVRKYREKKKAKAASLEDEVMRLKAVNNQLLKRLQ) constitute a bZIP domain. The basic motif stretch occupies residues 78–98 (KKRPLGNREAVRKYREKKKAK). A leucine-zipper region spans residues 102 to 116 (LEDEVMRLKAVNNQL).

It is found in the nucleus. Transcription factor involved in the response to zinc ion deficiency. Binds to the consensus sequence 5'-[AG]TGTCGACA[CT]-3' also called zinc deficiency response element (ZDRE). The ZDRE sequence is conserved in the plant kingdom and present in the promoters of genes that constitute the primary response to zinc deficiency, comprising additional ZIP metal transporter genes. Required for zinc accumulation in roots. Mediates the expression of the zinc transporter ZIP12 during growth in zinc-deficient conditions. ZIP12 transporter is involved in zinc uptake in roots. This is Basic leucine zipper 23 from Arabidopsis thaliana (Mouse-ear cress).